Here is a 566-residue protein sequence, read N- to C-terminus: Heat shock protein 70 homolog C57A7.12 (566 aa).

39-46 provides a ligand contact to ATP; it reads AFNRDGKT. Phosphoserine is present on residues serine 86 and serine 500.

The protein belongs to the heat shock protein 70 family.

This is Heat shock protein 70 homolog C57A7.12 from Schizosaccharomyces pombe (strain 972 / ATCC 24843) (Fission yeast).